We begin with the raw amino-acid sequence, 1358 residues long: DNA-directed RNA polymerase subunit beta (1358 aa).

This sequence belongs to the RNA polymerase beta chain family. In terms of assembly, the RNAP catalytic core consists of 2 alpha, 1 beta, 1 beta' and 1 omega subunit. When a sigma factor is associated with the core the holoenzyme is formed, which can initiate transcription.

The catalysed reaction is RNA(n) + a ribonucleoside 5'-triphosphate = RNA(n+1) + diphosphate. Functionally, DNA-dependent RNA polymerase catalyzes the transcription of DNA into RNA using the four ribonucleoside triphosphates as substrates. This is DNA-directed RNA polymerase subunit beta from Thioalkalivibrio sulfidiphilus (strain HL-EbGR7).